The chain runs to 316 residues: Transcription termination/antitermination protein NusG (316 aa).

Belongs to the NusG family.

Functionally, participates in transcription elongation, termination and antitermination. The protein is Transcription termination/antitermination protein NusG of Mycoplasma genitalium (strain ATCC 33530 / DSM 19775 / NCTC 10195 / G37) (Mycoplasmoides genitalium).